Here is a 327-residue protein sequence, read N- to C-terminus: Serine/threonine-protein phosphatase 4 regulatory subunit ppfr-4 (327 aa).

A coiled-coil region spans residues 141 to 185 (KLAVEEIRRLKLERHKKKQELKMAELRIQKQLEAVSIDEQNLREL). The segment at 271–327 (KFGHNPQNAPQSSAPAGAEAQESEEEVDDDEARAKAMRWDEYKDDHRRGWGNMHNKG) is disordered. Residues 275-284 (NPQNAPQSSA) show a composition bias toward polar residues. The span at 291–301 (QESEEEVDDDE) shows a compositional bias: acidic residues. Residues 302 to 318 (ARAKAMRWDEYKDDHRR) show a composition bias toward basic and acidic residues.

As to quaternary structure, serine/threonine-protein phosphatase 4 (PP4) occurs in different assemblies of the catalytic and one or more regulatory subunits. The catalytic subunit is likely to be pph-4.1.

Its function is as follows. Probable regulatory subunit of serine/threonine-protein phosphatase PP4 which may play a role in meiosis and embryonic mitosis. Probably in association with catalytic subunit pph-4.1, regulates microtubule severing during oocyte meiosis II by dephosphorylating and likely activating mei-1, a component of the katanin microtubule severing complex. The chain is Serine/threonine-protein phosphatase 4 regulatory subunit ppfr-4 from Caenorhabditis elegans.